The chain runs to 625 residues: Phosphomethylpyrimidine synthase (625 aa).

Substrate is bound by residues Asn-230, Met-259, Tyr-288, His-324, 344–346 (SRG), 385–388 (DGLR), and Glu-424. His-428 provides a ligand contact to Zn(2+). Tyr-451 provides a ligand contact to substrate. Zn(2+) is bound at residue His-492. [4Fe-4S] cluster-binding residues include Cys-572, Cys-575, and Cys-580.

It belongs to the ThiC family. As to quaternary structure, homodimer. Requires [4Fe-4S] cluster as cofactor.

The enzyme catalyses 5-amino-1-(5-phospho-beta-D-ribosyl)imidazole + S-adenosyl-L-methionine = 4-amino-2-methyl-5-(phosphooxymethyl)pyrimidine + CO + 5'-deoxyadenosine + formate + L-methionine + 3 H(+). Its pathway is cofactor biosynthesis; thiamine diphosphate biosynthesis. In terms of biological role, catalyzes the synthesis of the hydroxymethylpyrimidine phosphate (HMP-P) moiety of thiamine from aminoimidazole ribotide (AIR) in a radical S-adenosyl-L-methionine (SAM)-dependent reaction. This Xanthomonas oryzae pv. oryzae (strain MAFF 311018) protein is Phosphomethylpyrimidine synthase.